We begin with the raw amino-acid sequence, 522 residues long: Lysine--tRNA ligase (522 aa).

The 'HIGH' region signature appears at 44–52 (PSGLPHIGT). Positions 290 to 294 (KISKS) match the 'KMSKS' region motif. Lys293 provides a ligand contact to ATP.

Belongs to the class-I aminoacyl-tRNA synthetase family.

Its subcellular location is the cytoplasm. It catalyses the reaction tRNA(Lys) + L-lysine + ATP = L-lysyl-tRNA(Lys) + AMP + diphosphate. In Rickettsia conorii (strain ATCC VR-613 / Malish 7), this protein is Lysine--tRNA ligase.